Here is a 369-residue protein sequence, read N- to C-terminus: Methylthioribose-1-phosphate isomerase (369 aa).

An N-acetylmethionine modification is found at Met1. An Omega-N-methylarginine modification is found at Arg158. Asp248 functions as the Proton donor in the catalytic mechanism. A Phosphoserine modification is found at Ser366.

This sequence belongs to the eIF-2B alpha/beta/delta subunits family. MtnA subfamily.

The protein localises to the cytoplasm. The protein resides in the nucleus. The catalysed reaction is 5-(methylsulfanyl)-alpha-D-ribose 1-phosphate = 5-(methylsulfanyl)-D-ribulose 1-phosphate. It participates in amino-acid biosynthesis; L-methionine biosynthesis via salvage pathway; L-methionine from S-methyl-5-thio-alpha-D-ribose 1-phosphate: step 1/6. Its function is as follows. Catalyzes the interconversion of methylthioribose-1-phosphate (MTR-1-P) into methylthioribulose-1-phosphate (MTRu-1-P). In Mus musculus (Mouse), this protein is Methylthioribose-1-phosphate isomerase (Mri1).